Consider the following 575-residue polypeptide: Carboxylesterase 5A (575 aa).

Residues methionine 1 to threonine 28 form the signal peptide. Cysteines 94 and 121 form a disulfide. An N-linked (GlcNAc...) asparagine glycan is attached at asparagine 134. Residue serine 226 is the Acyl-ester intermediate of the active site. Cysteine 280 and cysteine 291 are disulfide-bonded. Residue asparagine 281 is glycosylated (N-linked (GlcNAc...) asparagine). Glutamate 345 (charge relay system) is an active-site residue. Residue asparagine 363 is glycosylated (N-linked (GlcNAc...) asparagine). Histidine 454 (charge relay system) is an active-site residue. N-linked (GlcNAc...) asparagine glycosylation occurs at asparagine 524.

It belongs to the type-B carboxylesterase/lipase family. Post-translationally, N-glycosylated.

Its subcellular location is the secreted. It carries out the reaction a carboxylic ester + H2O = an alcohol + a carboxylate + H(+). In terms of biological role, involved in the detoxification of xenobiotics and in the activation of ester and amide prodrugs. In Mus musculus (Mouse), this protein is Carboxylesterase 5A (Ces5a).